The sequence spans 158 residues: Small ribosomal subunit protein uS7 (158 aa).

The protein belongs to the universal ribosomal protein uS7 family. In terms of assembly, part of the 30S ribosomal subunit. Contacts proteins S9 and S11.

In terms of biological role, one of the primary rRNA binding proteins, it binds directly to 16S rRNA where it nucleates assembly of the head domain of the 30S subunit. Is located at the subunit interface close to the decoding center, probably blocks exit of the E-site tRNA. The sequence is that of Small ribosomal subunit protein uS7 from Phocaeicola vulgatus (strain ATCC 8482 / DSM 1447 / JCM 5826 / CCUG 4940 / NBRC 14291 / NCTC 11154) (Bacteroides vulgatus).